The chain runs to 224 residues: MAILKNDWAPLLEEEFHKPYYIKLREFLKEEYRTRTIYPDMYDIFNALHYTPYAQVKVVILGQDPYHGPGQAHGLSFSVKPGVPIPPSLANIFKELHDDLGCYIPNNGYLVKWAKQGVLLLNTVLTVRRGEANSHKGKGWEFFTDRVIELVNEKEDPVVFLLWGRHAQAKKELITNPRHHIIEAPHPSPFSAARGFFGHRPFSRTNAFLQKVGREPIDWQIENI.

Asp-64 functions as the Proton acceptor in the catalytic mechanism.

This sequence belongs to the uracil-DNA glycosylase (UDG) superfamily. UNG family.

Its subcellular location is the cytoplasm. The catalysed reaction is Hydrolyzes single-stranded DNA or mismatched double-stranded DNA and polynucleotides, releasing free uracil.. Functionally, excises uracil residues from the DNA which can arise as a result of misincorporation of dUMP residues by DNA polymerase or due to deamination of cytosine. This chain is Uracil-DNA glycosylase, found in Geobacillus sp. (strain WCH70).